The primary structure comprises 277 residues: Phosphonates import ATP-binding protein PhnC 2 (277 aa).

Residues 5-253 (IHVQGLNKTF…FLNDLYGADA (249 aa)) form the ABC transporter domain. 37 to 44 (GASGSGKS) serves as a coordination point for ATP.

This sequence belongs to the ABC transporter superfamily. Phosphonates importer (TC 3.A.1.9.1) family. The complex is composed of two ATP-binding proteins (PhnC), two transmembrane proteins (PhnE) and a solute-binding protein (PhnD).

It localises to the cell inner membrane. The enzyme catalyses phosphonate(out) + ATP + H2O = phosphonate(in) + ADP + phosphate + H(+). Functionally, part of the ABC transporter complex PhnCDE involved in phosphonates import. Responsible for energy coupling to the transport system. This Pseudomonas syringae pv. syringae (strain B728a) protein is Phosphonates import ATP-binding protein PhnC 2.